A 287-amino-acid polypeptide reads, in one-letter code: Festuclavine synthase II (287 aa).

This sequence belongs to the fgaFS/easG family.

The enzyme catalyses festuclavine + NAD(+) = 6,8-dimethyl-6,7-didehydroergoline + NADH + H(+). It participates in alkaloid biosynthesis; ergot alkaloid biosynthesis. Its function is as follows. Festuclavine synthase; part of the gene cluster that mediates the biosynthesis of isofumigaclavines, fungal ergot alkaloids. The tryptophan dimethylallyltransferase ifgA catalyzes the first step of ergot alkaloid biosynthesis by condensing dimethylallyl diphosphate (DMAP) and tryptophan to form 4-dimethylallyl-L-tryptophan. The second step is catalyzed by the methyltransferase ifgB that methylates 4-dimethylallyl-L-tryptophan in the presence of S-adenosyl-L-methionine, resulting in the formation of N-methyl-dimethylallyl-L-tryptophan. The catalase ifgD and the FAD-dependent oxidoreductase ifgC then transform N-methyl-dimethylallyl-L-tryptophan to chanoclavine-I which is further oxidized by ifgE in the presence of NAD(+), resulting in the formation of chanoclavine-I aldehyde. The chanoclavine-I aldehyde reductases ifgG and/or fgaOx3 reduce chanoclavine-I aldehyde to dihydrochanoclavine-I aldehyde that spontaneously dehydrates to form 6,8-dimethyl-6,7-didehydroergoline. The festuclavine dehydrogenases ifgF1 and/or ifgF2 then catalyze the reduction of 6,8-dimethyl-6,7-didehydroergoline to form festuclavine. Hydrolysis of festuclavine by a yet undetermined cytochrome P450 monooxygenase (called ifgH) then leads to the formation of isofumigaclavine B which is in turn acetylated by ifgI to isofumigaclavine A. Penicillium roqueforti has interestingly at least two sets of genes for the consumption of chanoclavine-I aldehyde on three different loci, the OYEs ifgG/fgaOx3 and the festuclavine synthase homologs ifgF1/ifgF2. The reason for the duplication of these genes is unclear, probably to ensure the conversion of chanoclavine-I aldehyde by differential gene expression under various environmental conditions. The protein is Festuclavine synthase II of Penicillium roqueforti (strain FM164).